Here is a 91-residue protein sequence, read N- to C-terminus: Transcription factor ILI3 (91 aa).

Residues 3-58 (SRRGGGGGGGRITDEEINELISKLQALLPESSRSRGASRSSASKLLKETCSYIKSL) form the bHLH domain.

The protein belongs to the bHLH protein family.

Atypical and probable non DNA-binding bHLH transcription that integrates multiple signaling pathways to regulate cell elongation and plant development. The chain is Transcription factor ILI3 (ILI3) from Oryza sativa subsp. indica (Rice).